Here is a 311-residue protein sequence, read N- to C-terminus: Methionyl-tRNA formyltransferase (311 aa).

(6S)-5,6,7,8-tetrahydrofolate is bound at residue 112 to 115 (SLLP).

Belongs to the Fmt family.

The enzyme catalyses L-methionyl-tRNA(fMet) + (6R)-10-formyltetrahydrofolate = N-formyl-L-methionyl-tRNA(fMet) + (6S)-5,6,7,8-tetrahydrofolate + H(+). Its function is as follows. Attaches a formyl group to the free amino group of methionyl-tRNA(fMet). The formyl group appears to play a dual role in the initiator identity of N-formylmethionyl-tRNA by promoting its recognition by IF2 and preventing the misappropriation of this tRNA by the elongation apparatus. This chain is Methionyl-tRNA formyltransferase, found in Agrobacterium fabrum (strain C58 / ATCC 33970) (Agrobacterium tumefaciens (strain C58)).